The primary structure comprises 121 residues: Small ribosomal subunit protein uS13 (121 aa).

The interval 91–121 (HRRGLPVRGQNSKNNARTRKGPRRTVANKKK) is disordered. The span at 106 to 121 (ARTRKGPRRTVANKKK) shows a compositional bias: basic residues.

The protein belongs to the universal ribosomal protein uS13 family. As to quaternary structure, part of the 30S ribosomal subunit. Forms a loose heterodimer with protein S19. Forms two bridges to the 50S subunit in the 70S ribosome.

Functionally, located at the top of the head of the 30S subunit, it contacts several helices of the 16S rRNA. In the 70S ribosome it contacts the 23S rRNA (bridge B1a) and protein L5 of the 50S subunit (bridge B1b), connecting the 2 subunits; these bridges are implicated in subunit movement. Contacts the tRNAs in the A and P-sites. This Bacillus mycoides (strain KBAB4) (Bacillus weihenstephanensis) protein is Small ribosomal subunit protein uS13.